The sequence spans 69 residues: Small integral membrane protein 20 (69 aa).

Residues 1-8 lie on the Mitochondrial matrix side of the membrane; that stretch reads MAAARNLR. The chain crosses the membrane as a helical span at residues 9-29; it reads TALIFGGFISMVGAAFYPIYF. The Mitochondrial intermembrane segment spans residues 30-69; sequence RPLLRLEEYQKEQAVNRAGIVQEDVQPPGLKVWSDPFGRK. F66 carries the phenylalanine amide modification.

As to quaternary structure, component of the MITRAC (mitochondrial translation regulation assembly intermediate of cytochrome c oxidase complex) complex, the core components of this complex being Coa3/Mitrac12 and Cox14. Interacts with Coa3/Mitrac12 and Cox4i1. Directly interacts with newly synthesized Mt-Co1/Cox1. Highly expressed in the hypothalamus, substantia nigra reticulata, Edinger-Westphal nucleus, and nucleus of the solitary tract/dorsal motor nucleus of the vagus, the spinal cord, and sensory ganglia (at protein level). Also expressed in the heart, thymus, esophagus, stomach, spleen, lung, pituitary gland, kidney, jejunum, duodenum, ileum, cerebrum, pons, and colon (at protein level). Expressed in preadipocytes and apidocytes (at protein level). Expressed in pancreatic islet cells (at protein level).

The protein localises to the mitochondrion inner membrane. Its subcellular location is the secreted. Its function is as follows. Component of the MITRAC (mitochondrial translation regulation assembly intermediate of cytochrome c oxidase complex) complex, that regulates cytochrome c oxidase assembly. Promotes the progression of complex assembly after the association of Mt-Co1/Cox11 with Cox4I1 and Cox6c. Chaperone-like assembly factor required to stabilize newly synthesized Mt-Co1/Cox1 and to prevent its premature turnover. In terms of biological role, peptide involved in a broad spectrum of regulatory functions. Is a ligand for GPR173. As part of the reproductive cycle, it regulates gonadotropin-releasing hormone (GnRH) signaling in the hypothalamus and pituitary gland which augments the release of luteinizing hormone. More specifically, it regulates the expression of transcription factors CEBPB and POU2F1/OCT1 through the cAMP-PKA signaling pathway, which subsequently regulate the expression of GNRHR and KISS1. Plays a protective role in memory retention through activation of GNRHR. Regulates the secretion of AVP by hypothalamic neurons. Plays a role in the transduction of the itch sensation. Induces anxiolytic effects, reducing behavior associated with anxiety. Regulates food intake as well as satiation and satiety by increasing NUCB2 expression in neurons. In the ovary, it regulates follicular growth by stimulating granulosa cell proliferation by increasing the expression of GPR173, CREB1, CYP19A1, KITLG, FSHR, and LHCGR. It also increases the production of estradiol (E2). In the heart, it regulates contractility and relaxation by activating the AKT1-NOS3 and MAPK1-MAPK3 signaling pathways. It also plays a cardioprotective role during ischemia, where it activates the SAFE and RISK pathways. Stimulates the proliferation and differentiation of preadipocytes. In pancreatic islet cells, it induces proliferation of islet cells as well as the production of INS1 and INS2 through activation of the MAPK1-MAPK3 signaling pathways. This Rattus norvegicus (Rat) protein is Small integral membrane protein 20.